A 304-amino-acid polypeptide reads, in one-letter code: E3 ubiquitin-protein ligase CHIP (304 aa).

Basic and acidic residues predominate over residues 1–10 (MKGKEEKEGG). The disordered stretch occupies residues 1-30 (MKGKEEKEGGARLGTGGGGSPDKSPSAQEL). Residue Lys-2 forms a Glycyl lysine isopeptide (Lys-Gly) (interchain with G-Cter in ubiquitin) linkage. The segment covering 11 to 20 (ARLGTGGGGS) has biased composition (gly residues). A Phosphoserine modification is found at Ser-20. A Glycyl lysine isopeptide (Lys-Gly) (interchain with G-Cter in ubiquitin) cross-link involves residue Lys-23. Residues Ser-24 and Ser-26 each carry the phosphoserine modification. 3 TPR repeats span residues 27–60 (AQELKEQGNRLFVGRKYPEAAACYGRAITRNPLV), 61–94 (AVYYTNRALCYLKMQQPEQALADCRRALELDGQS), and 96–128 (KAHFFLGQCQLEMESYDEAIANLQRAYSLAKEQ). The interval 102 to 201 (GQCQLEMESY…GHIRAQQACI (100 aa)) is required for interaction with MAPK7. Positions 143 to 197 (AKKKRWNSIEERRIHQESELHSYLTRLIAAERERELEECQRNHEGDEDDGHIRAQ) are required for interaction with and ubiquitination of MYOCD. The required for interaction with FOXO1 stretch occupies residues 144–198 (KKKRWNSIEERRIHQESELHSYLTRLIAAERERELEECQRNHEGDEDDGHIRAQQ). Residues 144–304 (KKKRWNSIEE…ISENGWVEDY (161 aa)) form a required for ubiquitination of FOXO1 region. Ser-150 carries the phosphoserine modification. Glycyl lysine isopeptide (Lys-Gly) (interchain with G-Cter in ubiquitin) cross-links involve residues Lys-222 and Lys-256. The U-box domain occupies 227–301 (DIPDYLCGKI…DAFISENGWV (75 aa)). Position 274 is a phosphoserine (Ser-274).

Homodimer. Interacts with BAG2, and with the E2 ubiquitin conjugating enzymes UBE2D1, UBE2D2 and UBE2D3. Detected in a ternary complex containing STUB1, HSPA1A and HSPBP1. Part of a complex composed of STUB1/CHIP, VCP/p97, CHRNA3, and UBXN2A that modulates the ubiquitination and endoplasmic reticulum-associated degradation (ERAD) of CHRNA3. Within the complex UBXN2A acts as a scaffold protein required for the interaction of CHRNA3 with VCP/p97, this interaction also inhibits CHRNA3 ubiquitination by STUB1/CHIP and subsequently ERAD. Interacts with MKKS. Interacts with DNAAF4. Interacts (via the U-box domain) with the UBE2V2-UBE2N heterodimer; the complex has a specific 'Lys-63'-linked polyubiquitination activity. Interacts (when monoubiquitinated) with ATXN3. Interacts with UBE2W. Interacts with DNAJB6. Interacts with FLCN and HSP90AA1. Interacts with HSP90. Interacts with UBE2N and UBE2V1. Interacts (via TPR repeats) with HSPA8 (via C-terminus). Interacts (via TPR repeats) with HSPA1A (via C-terminus). Interacts with the non-acetylated form of HSPA1A and HSPA1B. Interacts with SMAD3 and HSP90AB1. Interacts with UBE4B. Interacts with PRMT5. Interacts with MYOCD (via C-terminus). Interacts with FOXO1 (when phosphorylated on 'Ser-250'). Interacts with MAPK7/ERK5; the interaction is enhanced in the presence of IGF1 or MAP2K5 and promotes STUB1/CHIP E3 ligase activity. Interacts with and ubiquitinates ESR1; the interaction is promoted in the absence of estradiol (17-beta-estradiol/E2). Interacts with ESR2. Interacts with and ubiquitinates NFATC3; HSPA1A/HSP70 is required as a co-chaperone. In macrophages, interacts with PAQR3; the interaction promotes PPARG poylubiquitination and STUB1-mediated degradation. Component of the chaperone-assisted selective autophagy (CASA) complex consisting of BAG3, HSPA8/HSC70, HSPB8 and STUB1/CHIP. Post-translationally, auto-ubiquitinated; mediated by UBE2D1 and UBE2D2 and enhanced in the presence of MAP2K5. Monoubiquitinated at Lys-2 following cell stress by UBE2W, promoting the interaction with ATXN3. As to expression, expressed in the adventitia layer of the carotid artery (at protein level). Expressed in the CA1 region of the hippocampus (at protein level). Expressed in the uterus (at protein level).

It is found in the cytoplasm. The protein localises to the nucleus. The protein resides in the mitochondrion. The enzyme catalyses S-ubiquitinyl-[E2 ubiquitin-conjugating enzyme]-L-cysteine + [acceptor protein]-L-lysine = [E2 ubiquitin-conjugating enzyme]-L-cysteine + N(6)-ubiquitinyl-[acceptor protein]-L-lysine.. Its pathway is protein modification; protein ubiquitination. In terms of biological role, E3 ubiquitin-protein ligase which targets misfolded chaperone substrates towards proteasomal degradation. Plays a role in the maintenance of mitochondrial morphology and promotes mitophagic removal of dysfunctional mitochondria; thereby acts as a protector against apoptosis in response to cellular stress. Negatively regulates vascular smooth muscle contraction, via degradation of the transcriptional activator MYOCD and subsequent loss of transcription of genes involved in vascular smooth muscle contraction. Promotes survival and proliferation of cardiac smooth muscle cells via ubiquitination and degradation of FOXO1, resulting in subsequent repression of FOXO1-mediated transcription of pro-apoptotic genes. Ubiquitinates ICER-type isoforms of CREM and targets them for proteasomal degradation, thereby acts as a positive effector of MAPK/ERK-mediated inhibition of apoptosis in cardiomyocytes. Inhibits lipopolysaccharide-induced apoptosis and hypertrophy in cardiomyocytes, via ubiquitination and subsequent proteasomal degradation of NFATC3. Collaborates with ATXN3 in the degradation of misfolded chaperone substrates: ATXN3 restricting the length of ubiquitin chain attached to STUB1/CHIP substrates and preventing further chain extension. Ubiquitinates NOS1 in concert with Hsp70 and Hsp40. Modulates the activity of several chaperone complexes, including Hsp70, Hsc70 and Hsp90. Ubiquitinates CHRNA3 targeting it for endoplasmic reticulum-associated degradation in cortical neurons, as part of the STUB1-VCP-UBXN2A complex. Ubiquitinates and promotes ESR1 proteasomal degradation in response to age-related circulating estradiol (17-beta-estradiol/E2) decline, thereby promotes neuronal apoptosis in response to ischemic reperfusion injury. Mediates transfer of non-canonical short ubiquitin chains to HSPA8 that have no effect on HSPA8 degradation. Mediates polyubiquitination of DNA polymerase beta (POLB) at 'Lys-41', 'Lys-61' and 'Lys-81', thereby playing a role in base-excision repair: catalyzes polyubiquitination by amplifying the HUWE1/ARF-BP1-dependent monoubiquitination and leading to POLB-degradation by the proteasome. Mediates polyubiquitination of CYP3A4. Ubiquitinates EPHA2 and may regulate the receptor stability and activity through proteasomal degradation. Acts as a co-chaperone for HSPA1A and HSPA1B chaperone proteins and promotes ubiquitin-mediated protein degradation. Negatively regulates the suppressive function of regulatory T-cells (Treg) during inflammation by mediating the ubiquitination and degradation of FOXP3 in a HSPA1A/B-dependent manner. Catalyzes monoubiquitination of SIRT6, preventing its degradation by the proteasome. Likely mediates polyubiquitination and down-regulates plasma membrane expression of PD-L1/CD274, an immune inhibitory ligand critical for immune tolerance to self and antitumor immunity. Negatively regulates TGF-beta signaling by modulating the basal level of SMAD3 via ubiquitin-mediated degradation. Plays a role in the degradation of TP53. Mediates ubiquitination of RIPK3 leading to its subsequent proteasome-dependent degradation. May regulate myosin assembly in striated muscles together with UBE4B and VCP/p97 by targeting myosin chaperone UNC45B for proteasomal degradation. Ubiquitinates PPARG in macrophages playing a role in M2 macrophages polarization and angiogenesis. In Rattus norvegicus (Rat), this protein is E3 ubiquitin-protein ligase CHIP.